A 149-amino-acid polypeptide reads, in one-letter code: Large ribosomal subunit protein bL9 (149 aa).

Belongs to the bacterial ribosomal protein bL9 family.

In terms of biological role, binds to the 23S rRNA. This Legionella pneumophila (strain Lens) protein is Large ribosomal subunit protein bL9.